Here is a 493-residue protein sequence, read N- to C-terminus: Glutamate--tRNA ligase (493 aa).

The short motif at 10–20 (PSPTGDPHVGT) is the 'HIGH' region element. Zn(2+) is bound by residues cysteine 107, cysteine 109, cysteine 134, and histidine 136. Positions 251 to 255 (KLSKR) match the 'KMSKS' region motif. Residue lysine 254 coordinates ATP.

The protein belongs to the class-I aminoacyl-tRNA synthetase family. Glutamate--tRNA ligase type 1 subfamily. In terms of assembly, monomer. Requires Zn(2+) as cofactor.

It localises to the cytoplasm. It catalyses the reaction tRNA(Glu) + L-glutamate + ATP = L-glutamyl-tRNA(Glu) + AMP + diphosphate. Functionally, catalyzes the attachment of glutamate to tRNA(Glu) in a two-step reaction: glutamate is first activated by ATP to form Glu-AMP and then transferred to the acceptor end of tRNA(Glu). The sequence is that of Glutamate--tRNA ligase from Stutzerimonas stutzeri (strain A1501) (Pseudomonas stutzeri).